Here is a 1221-residue protein sequence, read N- to C-terminus: 2-oxoglutarate dehydrogenase E1/E2 component (1221 aa).

The 2-oxoglutarate dehydrogenase E1, N-terminal part stretch occupies residues Ser-2–Gly-40. The interval Gln-22–Ile-107 is disordered. Over residues Lys-23–Phe-36 the composition is skewed to basic and acidic residues. Over residues Gly-41–Gln-52 the composition is skewed to polar residues. The tract at residues Gly-41 to Lys-89 is linker. Residues Pro-53–Ala-73 show a composition bias toward low complexity. The segment covering Pro-74 to Glu-90 has biased composition (basic and acidic residues). Residues Glu-90 to Asp-337 form a succinyltransferase E2 region. His-316 acts as the Proton acceptor; for succinyltransferase activity in catalysis. Residues Asp-338–Ala-1221 are 2-oxoglutarate dehydrogenase E1, C-terminal part. Arg-544 serves as a coordination point for thiamine diphosphate. 2-oxoglutarate contacts are provided by His-583 and Ser-608. Ser-608, Leu-610, Asp-645, Ala-646, Ala-647, and Asn-678 together coordinate thiamine diphosphate. Asp-645 lines the Mg(2+) pocket. Mg(2+) is bound by residues Asn-678 and Ile-680. His-1017 contributes to the 2-oxoglutarate binding site. Thr-1035, Arg-1051, Lys-1087, Ser-1090, and Arg-1144 together coordinate acetyl-CoA.

This sequence in the N-terminal section; belongs to the alpha-ketoglutarate dehydrogenase family. It in the C-terminal section; belongs to the 2-oxoacid dehydrogenase family. In terms of assembly, homodimer. Part of an unusual ODH/PDH supercomplex, consisting of AceE (E1), AceF (E2), and Lpd (E3) together with OdhA (E1+E2). Interacts with the FHA domain of unphosphorylated OdhI via its C-terminal dehydrogenase domain. The cofactor is Mg(2+). Thiamine diphosphate is required as a cofactor.

The catalysed reaction is N(6)-[(R)-lipoyl]-L-lysyl-[protein] + 2-oxoglutarate + H(+) = N(6)-[(R)-S(8)-succinyldihydrolipoyl]-L-lysyl-[protein] + CO2. It catalyses the reaction N(6)-[(R)-dihydrolipoyl]-L-lysyl-[protein] + succinyl-CoA = N(6)-[(R)-S(8)-succinyldihydrolipoyl]-L-lysyl-[protein] + CoA. The protein operates within carbohydrate metabolism; tricarboxylic acid cycle; succinyl-CoA from 2-oxoglutarate (dehydrogenase route): step 1/1. Inhibited by unphosphorylated OdhI, but not by phosphorylated OdhI. Catalyzes the E1 and E2 reactions as part of 2-oxoglutarate dehydrogenase (ODH) activity, to convert 2-oxoglutarate to succinyl-CoA and CO(2). OdhA has reductase activity with 2-oxoglutarate but does not react with pyruvate, and also displays transsuccinylase but no transacetylase activity. Since OdhA is not lipoylated, the succinyltransferase activity of its E2 domain is dependent on lipoyl residues of the acetyltransferase AceF. The sequence is that of 2-oxoglutarate dehydrogenase E1/E2 component from Corynebacterium glutamicum (strain ATCC 13032 / DSM 20300 / JCM 1318 / BCRC 11384 / CCUG 27702 / LMG 3730 / NBRC 12168 / NCIMB 10025 / NRRL B-2784 / 534).